Consider the following 242-residue polypeptide: Triosephosphate isomerase (242 aa).

Position 8-10 (asparagine 8–lysine 10) interacts with substrate. The active-site Electrophile is histidine 91. Glutamate 155 functions as the Proton acceptor in the catalytic mechanism. The substrate site is built by glycine 161 and serine 192.

Belongs to the triosephosphate isomerase family. Homodimer.

The protein resides in the cytoplasm. The catalysed reaction is D-glyceraldehyde 3-phosphate = dihydroxyacetone phosphate. It participates in carbohydrate biosynthesis; gluconeogenesis. It functions in the pathway carbohydrate degradation; glycolysis; D-glyceraldehyde 3-phosphate from glycerone phosphate: step 1/1. In terms of biological role, involved in the gluconeogenesis. Catalyzes stereospecifically the conversion of dihydroxyacetone phosphate (DHAP) to D-glyceraldehyde-3-phosphate (G3P). The polypeptide is Triosephosphate isomerase (Wolbachia pipientis wMel).